A 149-amino-acid polypeptide reads, in one-letter code: Large ribosomal subunit protein bL9 (149 aa).

This sequence belongs to the bacterial ribosomal protein bL9 family.

Functionally, binds to the 23S rRNA. In Syntrophus aciditrophicus (strain SB), this protein is Large ribosomal subunit protein bL9.